The chain runs to 172 residues: MDSLAWRVAALLLGLLVECTEAKKHCWYFEGLYPTYYICRPYEDCCGSRCCVRALSIQRLWYFWFLLMMGVLFCCGAGFFIRRRMYPPPLIEEPAFNVSYTRQPQNPTPGAQPLGLPYYTDPGGSGMNPAGNPVAMAFQVQPNSSQGSTAYPPPPSYCNTPPPPYEQVVKTK.

A signal peptide spans 1–22 (MDSLAWRVAALLLGLLVECTEA). Residues 23–60 (KKHCWYFEGLYPTYYICRPYEDCCGSRCCVRALSIQRL) lie on the Extracellular side of the membrane. Residues 61 to 81 (WYFWFLLMMGVLFCCGAGFFI) traverse the membrane as a helical segment. Residues 82-172 (RRRMYPPPLI…PPYEQVVKTK (91 aa)) lie on the Cytoplasmic side of the membrane. Residues 142 to 172 (PNSSQGSTAYPPPPSYCNTPPPPYEQVVKTK) form a disordered region. Pro residues predominate over residues 151–165 (YPPPPSYCNTPPPPY).

This sequence belongs to the VOPP1/ECOP family. Interacts with WWOX (via WW domain).

The protein resides in the cytoplasmic vesicle membrane. It localises to the late endosome membrane. It is found in the lysosome membrane. Its function is as follows. Increases the transcriptional activity of NFKB1 by facilitating its nuclear translocation, DNA-binding and associated apoptotic response, when overexpressed. May sequester WWOX in lysosomal vesicles and thereby regulate WWOX role as tumor suppressor. This chain is WW domain binding protein VOPP1 (VOPP1), found in Bos taurus (Bovine).